A 427-amino-acid polypeptide reads, in one-letter code: 3-phosphoshikimate 1-carboxyvinyltransferase (427 aa).

3-phosphoshikimate is bound by residues K22, S23, and R27. Phosphoenolpyruvate is bound at residue K22. Positions 96 and 124 each coordinate phosphoenolpyruvate. Positions 169, 170, 171, 197, 313, 336, and 340 each coordinate 3-phosphoshikimate. Phosphoenolpyruvate is bound at residue Q171. The active-site Proton acceptor is D313. 3 residues coordinate phosphoenolpyruvate: R344, R386, and K411.

Belongs to the EPSP synthase family. As to quaternary structure, monomer.

It localises to the cytoplasm. The enzyme catalyses 3-phosphoshikimate + phosphoenolpyruvate = 5-O-(1-carboxyvinyl)-3-phosphoshikimate + phosphate. It participates in metabolic intermediate biosynthesis; chorismate biosynthesis; chorismate from D-erythrose 4-phosphate and phosphoenolpyruvate: step 6/7. Its function is as follows. Catalyzes the transfer of the enolpyruvyl moiety of phosphoenolpyruvate (PEP) to the 5-hydroxyl of shikimate-3-phosphate (S3P) to produce enolpyruvyl shikimate-3-phosphate and inorganic phosphate. The sequence is that of 3-phosphoshikimate 1-carboxyvinyltransferase from Escherichia coli O9:H4 (strain HS).